We begin with the raw amino-acid sequence, 476 residues long: Homeobox even-skipped homolog protein 2 (476 aa).

2 disordered regions span residues 82–113 (TGSESTVSSEISSAAESRKKPGHYSEAAAEAD) and 142–185 (KGYA…GSGA). Low complexity-rich tracts occupy residues 84–96 (SESTVSSEISSAA) and 147–159 (SGSAAGTTTSASG). The segment covering 160–183 (SGLGSLHGGSGGSGGSAALGGSGS) has biased composition (gly residues). A DNA-binding region (homeobox) is located at residues 188-247 (VRRYRTAFTREQIARLEKEFYRENYVSRPRRCELAAALNLPETTIKVWFQNRRMKDKRQR).

It belongs to the even-skipped homeobox family.

The protein localises to the nucleus. The polypeptide is Homeobox even-skipped homolog protein 2 (EVX2) (Homo sapiens (Human)).